We begin with the raw amino-acid sequence, 677 residues long: WD and tetratricopeptide repeats protein 1 (677 aa).

WD repeat units follow at residues 45-84, 88-129, 132-172, 182-222, and 265-305; these read GHSG…KLLS, GHTA…TIHM, DHTN…KHSE, GQLV…NHRK, and RLRV…RPYT. Position 353 is a phosphoserine (Ser-353). TPR repeat units follow at residues 362 to 395 and 397 to 432; these read LERV…APHN and MLYG…NPCH. The disordered stretch occupies residues 487–509; that stretch reads NDGEEKKGPGGGAPVRLRSTSRK. A Phosphoserine modification is found at Ser-511. 2 WD repeats span residues 535-575 and 578-617; these read NTTT…LVRV and GDES…EDLT. The interval 655–677 is disordered; sequence SSGGAGASDDEDSSEGQVQCRPS.

It functions in the pathway protein modification; protein ubiquitination. Functionally, may function as a substrate receptor for CUL4-DDB1 E3 ubiquitin-protein ligase complex. The polypeptide is WD and tetratricopeptide repeats protein 1 (WDTC1) (Homo sapiens (Human)).